Here is a 726-residue protein sequence, read N- to C-terminus: ORC ubiquitin ligase 1 (726 aa).

The RING-type; degenerate zinc-finger motif lies at 18–56 (CHICLGKVRQPVICINNHVFCSICIDLWLKNNSQCPACR). Coiled coils occupy residues 87 to 129 (LRKT…TILD) and 155 to 270 (ETVA…MNSI). A Phosphoserine modification is found at serine 210. 2 disordered regions span residues 276–334 (SADG…TSKA) and 436–460 (NVSNKDSSEDDISRSENEKKSECFS). A compositionally biased stretch (basic and acidic residues) spans 280 to 290 (KGSKGSEEDVV). Positions 304 to 318 (SSTSSSSHLAKPSSS) are enriched in low complexity. Residues 319 to 334 (RLCDTSSARQESTSKA) are compositionally biased toward polar residues. The span at 446 to 457 (DISRSENEKKSE) shows a compositional bias: basic and acidic residues. Residues serine 526, serine 553, serine 561, serine 568, and serine 570 each carry the phosphoserine modification. Disordered stretches follow at residues 570-602 (SSQGSEFLEEPDKLEEKTELNLSKGSLTNDQLE) and 687-726 (QSPWSTSFVPEKRNKNVNQSTKRKIQSSLSSASPSKATKS). A compositionally biased stretch (basic and acidic residues) spans 579 to 588 (EPDKLEEKTE). Residues 589–602 (LNLSKGSLTNDQLE) show a composition bias toward polar residues. Residues 713 to 726 (SSLSSASPSKATKS) are compositionally biased toward low complexity. Serine 719 and serine 721 each carry phosphoserine.

Associates with ORC complex. Binds to chromatin; association is cell cycle-regulated, absent from mitotic chromosomes, is associated with chromatin from G1 and partially released from chromatin from mid S-phase. Post-translationally, auto-ubiquitinated.

The protein resides in the chromosome. The enzyme catalyses S-ubiquitinyl-[E2 ubiquitin-conjugating enzyme]-L-cysteine + [acceptor protein]-L-lysine = [E2 ubiquitin-conjugating enzyme]-L-cysteine + N(6)-ubiquitinyl-[acceptor protein]-L-lysine.. E3 ubiquitin ligase essential for DNA replication origin activation during S phase. Acts as a replication origin selector which selects the origins to be fired and catalyzes the multi-mono-ubiquitination of a subset of chromatin-bound ORC3 and ORC5 during S-phase. This chain is ORC ubiquitin ligase 1, found in Homo sapiens (Human).